A 69-amino-acid polypeptide reads, in one-letter code: Cytochrome c oxidase subunit 8A, mitochondrial (69 aa).

Residues 1–25 (MSVLTPLLLRGLTGSARRLPVPCAR) constitute a mitochondrion transit peptide. The SIFI-degron signature appears at 2 to 19 (SVLTPLLLRGLTGSARRL). At 26 to 36 (VHSKPPREQLG) the chain is on the mitochondrial matrix side. Residues 37 to 60 (TMDIAIGLTSCFVCFLLPSGWVLS) form a helical membrane-spanning segment. Over 61–69 (HLENYKKRE) the chain is Mitochondrial intermembrane.

Belongs to the cytochrome c oxidase VIII family. In terms of assembly, component of the cytochrome c oxidase (complex IV, CIV), a multisubunit enzyme composed of 14 subunits. The complex is composed of a catalytic core of 3 subunits MT-CO1, MT-CO2 and MT-CO3, encoded in the mitochondrial DNA, and 11 supernumerary subunits COX4I, COX5A, COX5B, COX6A, COX6B, COX6C, COX7A, COX7B, COX7C, COX8 and NDUFA4, which are encoded in the nuclear genome. The complex exists as a monomer or a dimer and forms supercomplexes (SCs) in the inner mitochondrial membrane with NADH-ubiquinone oxidoreductase (complex I, CI) and ubiquinol-cytochrome c oxidoreductase (cytochrome b-c1 complex, complex III, CIII), resulting in different assemblies (supercomplex SCI(1)III(2)IV(1) and megacomplex MCI(2)III(2)IV(2)). Post-translationally, in response to mitochondrial stress, the precursor protein is ubiquitinated by the SIFI complex in the cytoplasm before mitochondrial import, leading to its degradation. Within the SIFI complex, UBR4 initiates ubiquitin chain that are further elongated or branched by KCMF1.

It localises to the mitochondrion inner membrane. It participates in energy metabolism; oxidative phosphorylation. Functionally, component of the cytochrome c oxidase, the last enzyme in the mitochondrial electron transport chain which drives oxidative phosphorylation. The respiratory chain contains 3 multisubunit complexes succinate dehydrogenase (complex II, CII), ubiquinol-cytochrome c oxidoreductase (cytochrome b-c1 complex, complex III, CIII) and cytochrome c oxidase (complex IV, CIV), that cooperate to transfer electrons derived from NADH and succinate to molecular oxygen, creating an electrochemical gradient over the inner membrane that drives transmembrane transport and the ATP synthase. Cytochrome c oxidase is the component of the respiratory chain that catalyzes the reduction of oxygen to water. Electrons originating from reduced cytochrome c in the intermembrane space (IMS) are transferred via the dinuclear copper A center (CU(A)) of subunit 2 and heme A of subunit 1 to the active site in subunit 1, a binuclear center (BNC) formed by heme A3 and copper B (CU(B)). The BNC reduces molecular oxygen to 2 water molecules using 4 electrons from cytochrome c in the IMS and 4 protons from the mitochondrial matrix. The sequence is that of Cytochrome c oxidase subunit 8A, mitochondrial (COX8A) from Otolemur crassicaudatus (Brown greater galago).